The sequence spans 4835 residues: Midasin (4835 aa).

6 AAA-ATPase protomer regions span residues 12 to 161, 324 to 689, 797 to 1049, 1096 to 1375, 1489 to 1738, and 1821 to 2110; these read EVLR…PLVL, RSLD…HRFR, MTTI…AEII, KFQD…DYIT, APTT…FGYR, and ALEA…SIDI. ATP contacts are provided by residues 31–38, 356–363, 814–821, 1127–1134, 1513–1520, and 1839–1846; these read GPSASGRT, GPTGIGKT, GTTSSGKT, GVSGAGKT, GDPGVGKS, and GSPESGKS. The tract at residues 2197 to 4058 is linker; that stretch reads SVFIASTLNA…DGTGDQNVSK (1862 aa). Disordered regions lie at residues 4033–4056 and 4108–4523; these read DQKETDNDNQSGLGLGDGTGDQNV and IEEE…LLNP. Composition is skewed to acidic residues over residues 4109-4133, 4141-4150, 4226-4241, 4282-4291, and 4315-4330; these read EEEDSNGSDEEEVLEKEMGDEQGEA, EDDDSAEEYS, ADGEDETVNEELEEEQ, VDIDDNEASD, and NDEEEMQKDTEYDQEN. The span at 4331 to 4346 shows a compositional bias: polar residues; the sequence is ITDSNPDANEVGTNDQ. 3 stretches are compositionally biased toward basic and acidic residues: residues 4347 to 4360, 4394 to 4415, and 4429 to 4438; these read KQTHEDNDQFRQEN, EFQRIWKERLNIHDRESEKDEA, and VEFDDSKSGR. Over residues 4468 to 4477 the composition is skewed to polar residues; it reads HNSSCETSQS. Basic and acidic residues predominate over residues 4478–4488; it reads SHDRPPAEHLN. One can recognise a VWFA domain in the interval 4629 to 4818; that stretch reads QVLLAVDDSS…RHIEDLPETL (190 aa).

It belongs to the midasin family. In terms of assembly, associates with pre-60S ribosomes in the nucleoplasm.

It localises to the nucleus. Its subcellular location is the nucleolus. The protein localises to the nucleoplasm. In terms of biological role, nuclear chaperone required for maturation and nuclear export of pre-60S ribosome subunits. Functions at successive maturation steps to remove ribosomal factors at critical transition points, first driving the exit of early pre-60S particles from the nucleolus and then driving late pre-60S particles from the nucleus. In Giardia intestinalis (Giardia lamblia), this protein is Midasin (MDN1).